The following is a 133-amino-acid chain: MSEFTCVEAKSRFRAIRWTVEHLGLPKGFEGHFVGYSLYVDEVMDMSGCREEYILDSTGKHVAYFAWCVSCDIHHKGDILDVTSVVINPEADSKGLQRFLAKRFKYLAELHDCDWVSRCKHEGETMRVYFKEV.

The polypeptide is Protein 7 (Escherichia phage T7 (Bacteriophage T7)).